We begin with the raw amino-acid sequence, 803 residues long: Lon protease (803 aa).

Residues 9–202 (MPVLPLRDVV…YLLGMMESEA (194 aa)) enclose the Lon N-terminal domain. Residue 356 to 363 (GPPGVGKT) participates in ATP binding. The 182-residue stretch at 592-773 (QNRIGEVTGL…DEVLGFALEN (182 aa)) folds into the Lon proteolytic domain. Catalysis depends on residues Ser679 and Lys722.

Belongs to the peptidase S16 family. In terms of assembly, homohexamer. Organized in a ring with a central cavity.

It is found in the cytoplasm. The catalysed reaction is Hydrolysis of proteins in presence of ATP.. Its function is as follows. ATP-dependent serine protease that mediates the selective degradation of mutant and abnormal proteins as well as certain short-lived regulatory proteins. Required for cellular homeostasis and for survival from DNA damage and developmental changes induced by stress. Degrades polypeptides processively to yield small peptide fragments that are 5 to 10 amino acids long. Binds to DNA in a double-stranded, site-specific manner. This Haemophilus influenzae (strain ATCC 51907 / DSM 11121 / KW20 / Rd) protein is Lon protease.